The chain runs to 149 residues: Nucleoside diphosphate kinase (149 aa).

Lysine 9, phenylalanine 57, arginine 85, threonine 91, arginine 102, and asparagine 112 together coordinate ATP. Histidine 115 (pros-phosphohistidine intermediate) is an active-site residue.

It belongs to the NDK family. In terms of assembly, homotetramer. Mg(2+) serves as cofactor.

The protein localises to the cytoplasm. It carries out the reaction a 2'-deoxyribonucleoside 5'-diphosphate + ATP = a 2'-deoxyribonucleoside 5'-triphosphate + ADP. The enzyme catalyses a ribonucleoside 5'-diphosphate + ATP = a ribonucleoside 5'-triphosphate + ADP. Functionally, major role in the synthesis of nucleoside triphosphates other than ATP. The ATP gamma phosphate is transferred to the NDP beta phosphate via a ping-pong mechanism, using a phosphorylated active-site intermediate. The chain is Nucleoside diphosphate kinase from Carboxydothermus hydrogenoformans (strain ATCC BAA-161 / DSM 6008 / Z-2901).